The chain runs to 288 residues: MLQTSLTLPAPAKLNLFLHITGRRPDGYHNLQTVFQLLDFGDELTFTPNQSGEITITPAIEGVPLEQNLVYKAANILRSHVNRPELGATIHLTKRLPMGGGIGGGSSDAATTLVGLNYLWQTGVSPTTLAQLGRQLGADVPVFVEGNSAWAEGIGEQLIALDLPQYWYVVLTPACHVSTVEIFSHKDLTRDTLAITVAAFFEKGGKNDCQPLVERLFPQVRDAVDWLNKFGPAKLTGTGASVFAAFPSKDAAQKVFANKPKHLNGFVAQGVNESPLHQRLPEQCITGV.

Lysine 13 is a catalytic residue. 97–107 (PMGGGIGGGSS) contacts ATP. Aspartate 139 is an active-site residue.

It belongs to the GHMP kinase family. IspE subfamily.

It carries out the reaction 4-CDP-2-C-methyl-D-erythritol + ATP = 4-CDP-2-C-methyl-D-erythritol 2-phosphate + ADP + H(+). It participates in isoprenoid biosynthesis; isopentenyl diphosphate biosynthesis via DXP pathway; isopentenyl diphosphate from 1-deoxy-D-xylulose 5-phosphate: step 3/6. Its function is as follows. Catalyzes the phosphorylation of the position 2 hydroxy group of 4-diphosphocytidyl-2C-methyl-D-erythritol. In Saccharophagus degradans (strain 2-40 / ATCC 43961 / DSM 17024), this protein is 4-diphosphocytidyl-2-C-methyl-D-erythritol kinase.